A 474-amino-acid polypeptide reads, in one-letter code: Homeobox protein PKNOX2 (474 aa).

Residues 1 to 42 (MMQHASPAPALTMMATQNVPPPPYQDSPQMTATAQPPSKAQA) are disordered. Over residues 26–38 (DSPQMTATAQPPS) the composition is skewed to polar residues. Residues 96–179 (GSECITSASF…MHSDNLLRND (84 aa)) form the MEIS N-terminal domain. A DNA-binding region (homeobox) is located at residues 291–350 (KRGVLPKHATNIMRSWLFQHLMHPYPTEDEKRQIAAQTNLTLLQVNNWFINARRRILQPM). Disordered stretches follow at residues 351-371 (LDAS…QHRP), 385-405 (LQQQ…LDNL), and 423-474 (AAHD…DSLE). Basic residues predominate over residues 361–371 (KAKKIKSQHRP). Residues 429–456 (LDGTEEEDEDDMEEEEEEEEELEEEADE) show a composition bias toward acidic residues.

The protein belongs to the TALE/MEIS homeobox family.

It is found in the nucleus. The protein is Homeobox protein PKNOX2 (Pknox2) of Mus musculus (Mouse).